The primary structure comprises 223 residues: uncharacterized protein (223 aa).

The Tyr recombinase domain occupies 29 to 220 (KQTYKMFKED…AKEILKNIGD (192 aa)). Active-site residues include arginine 71, lysine 103, histidine 170, arginine 173, and histidine 196. Tyrosine 205 functions as the O-(3'-phospho-DNA)-tyrosine intermediate in the catalytic mechanism.

Belongs to the 'phage' integrase family.

This is an uncharacterized protein from Methanocaldococcus jannaschii (strain ATCC 43067 / DSM 2661 / JAL-1 / JCM 10045 / NBRC 100440) (Methanococcus jannaschii).